Reading from the N-terminus, the 472-residue chain is Adenosylhomocysteinase (472 aa).

T64, D138, and E198 together coordinate substrate. Residue 199 to 201 (TTT) participates in NAD(+) binding. Substrate is bound by residues K228 and D232. NAD(+)-binding positions include N233, 262–267 (GFGDVG), E285, N320, 341–343 (IGH), and N386.

Belongs to the adenosylhomocysteinase family. NAD(+) is required as a cofactor.

The protein resides in the cytoplasm. It catalyses the reaction S-adenosyl-L-homocysteine + H2O = L-homocysteine + adenosine. Its pathway is amino-acid biosynthesis; L-homocysteine biosynthesis; L-homocysteine from S-adenosyl-L-homocysteine: step 1/1. In terms of biological role, may play a key role in the regulation of the intracellular concentration of adenosylhomocysteine. This is Adenosylhomocysteinase from Prochlorococcus marinus subsp. pastoris (strain CCMP1986 / NIES-2087 / MED4).